We begin with the raw amino-acid sequence, 898 residues long: Netrin receptor UNC5A (898 aa).

Residues 1–25 form the signal peptide; that stretch reads MAVRPGLWPVLLGIVLAAWLRGSGA. The Extracellular segment spans residues 26-361; that stretch reads QQSATVANPV…TASCPEDVAL (336 aa). An Ig-like domain is found at 44–141; it reads PHFLVEPEDV…SGTTKSQKAY (98 aa). Disulfide bonds link C65/C126, C77/C124, and C170/C221. 2 N-linked (GlcNAc...) asparagine glycosylation sites follow: N107 and N218. The Ig-like C2-type domain occupies 155 to 238; that stretch reads PLAKEVSLEQ…RRRSTSAAVI (84 aa). TSP type-1 domains lie at 242–296 and 298–350; these read NGGW…TLCP and DGSW…DLCL. 3 C-linked (Man) tryptophan glycosylation sites follow: W245, W248, and W251. Disulfide bonds link C254/C291, C258/C295, and C269/C281. W301 and W304 each carry a C-linked (Man) tryptophan glycan. Intrachain disulfides connect C310-C344, C314-C349, and C322-C334. N343 carries N-linked (GlcNAc...) asparagine glycosylation. Residues 362–382 traverse the membrane as a helical segment; sequence YIGLVAVAVCLFLLLLALGLI. Residues 383–898 are Cytoplasmic-facing; it reads YCRKKEGLDS…GLFTVSEAEC (516 aa). The 144-residue stretch at 497–640 folds into the ZU5 domain; that stretch reads NMAYGTFNFL…LGRFALVGEA (144 aa). The interaction with DCC stretch occupies residues 661 to 679; that stretch reads SLEYNIRVYCLHDTHDALK. The region spanning 817 to 897 is the Death domain; that stretch reads QKIIASLDPP…AGLFTVSEAE (81 aa).

This sequence belongs to the unc-5 family. In terms of assembly, homodimer and homooligomer. Interacts with the cytoplasmic part of DCC. Interacts with MAGED1. Interacts with PRKCABP, possibly mediating some interaction with PKC. Interacts (via extracellular domain) with FLRT2 (via extracellular domain). Interacts (via extracellular domain) with FLRT3 (via extracellular domain). Post-translationally, phosphorylated on cytoplasmic tyrosine residues. Phosphorylated by PKC in vitro. In terms of processing, proteolytically cleaved by caspases during apoptosis. The cleavage does not take place when the receptor is associated with netrin ligand. Its cleavage by caspases is required to induce apoptosis. The two extracellular TSRs of UNC5A contain WxxWxxWxxC motifs that can be C-mannosylated on all tryptophans. DPY19L1 preferentially mannosylates the first two tryptophans and DPY19L3 prefers the third. C-mannosylation by DPY19L1 is required for transport of UNC5A from the endoplasmic reticulum to the cell surface. Mainly expressed in regions of differentiating neurons. Expressed at early stages of neural tube development in the ventral spinal cord. In developing hindbrain, it colocalizes with a number of cranial motor neuron subpopulations from embryonic E11 to E14, while DCC is expressed by motor neurons at E12. Also expressed in non-neural structures, such as the basal plane of the hindbrain and midbrain, in the developing hypothalamus, thalamus and in the pallidum.

The protein resides in the cell membrane. Its subcellular location is the membrane raft. It is found in the cell projection. It localises to the neuron projection. Its function is as follows. Receptor for netrin required for axon guidance. Functions in the netrin signaling pathway and promotes neurite outgrowth in response to NTN1. Mediates axon repulsion of neuronal growth cones in the developing nervous system in response to netrin. Axon repulsion in growth cones may be mediated by its association with DCC that may trigger signaling for repulsion. It also acts as a dependence receptor required for apoptosis induction when not associated with netrin ligand. The protein is Netrin receptor UNC5A (Unc5a) of Rattus norvegicus (Rat).